Reading from the N-terminus, the 636-residue chain is ATP-dependent zinc metalloprotease FtsH (636 aa).

The Cytoplasmic segment spans residues Met-1–Met-12. Residues Gly-13 to Ile-33 traverse the membrane as a helical segment. At Arg-34–Leu-104 the chain is on the periplasmic side. The helical transmembrane segment at Leu-105–Phe-125 threads the bilayer. Over Met-126–Glu-636 the chain is Cytoplasmic. Gly-197 to Thr-204 contributes to the ATP binding site. His-419 serves as a coordination point for Zn(2+). The active site involves Glu-420. Residues His-423 and Asp-497 each coordinate Zn(2+).

The protein in the central section; belongs to the AAA ATPase family. It in the C-terminal section; belongs to the peptidase M41 family. In terms of assembly, homohexamer. Requires Zn(2+) as cofactor.

It localises to the cell inner membrane. Functionally, acts as a processive, ATP-dependent zinc metallopeptidase for both cytoplasmic and membrane proteins. Plays a role in the quality control of integral membrane proteins. The chain is ATP-dependent zinc metalloprotease FtsH from Neorickettsia risticii (strain Illinois).